A 404-amino-acid polypeptide reads, in one-letter code: Formate-dependent phosphoribosylglycinamide formyltransferase (404 aa).

N(1)-(5-phospho-beta-D-ribosyl)glycinamide-binding positions include 25-26 (EL) and E85. Residues R118, K159, 164–169 (SSGKGQ), 199–202 (EGFI), and E207 contribute to the ATP site. The region spanning 123–318 (RLAAEELGLP…EFELHARAIL (196 aa)) is the ATP-grasp domain. The Mg(2+) site is built by E277 and E289. Residues D296, K365, and 372 to 373 (RR) contribute to the N(1)-(5-phospho-beta-D-ribosyl)glycinamide site.

This sequence belongs to the PurK/PurT family. In terms of assembly, homodimer.

It carries out the reaction N(1)-(5-phospho-beta-D-ribosyl)glycinamide + formate + ATP = N(2)-formyl-N(1)-(5-phospho-beta-D-ribosyl)glycinamide + ADP + phosphate + H(+). The protein operates within purine metabolism; IMP biosynthesis via de novo pathway; N(2)-formyl-N(1)-(5-phospho-D-ribosyl)glycinamide from N(1)-(5-phospho-D-ribosyl)glycinamide (formate route): step 1/1. Its function is as follows. Involved in the de novo purine biosynthesis. Catalyzes the transfer of formate to 5-phospho-ribosyl-glycinamide (GAR), producing 5-phospho-ribosyl-N-formylglycinamide (FGAR). Formate is provided by PurU via hydrolysis of 10-formyl-tetrahydrofolate. The sequence is that of Formate-dependent phosphoribosylglycinamide formyltransferase from Burkholderia pseudomallei (strain 1106a).